A 217-amino-acid polypeptide reads, in one-letter code: 3-demethoxyubiquinol 3-hydroxylase (217 aa).

Fe cation contacts are provided by glutamate 66, glutamate 96, histidine 99, glutamate 148, glutamate 180, and histidine 183.

Belongs to the COQ7 family. Fe cation serves as cofactor.

It is found in the cell membrane. It catalyses the reaction a 5-methoxy-2-methyl-3-(all-trans-polyprenyl)benzene-1,4-diol + AH2 + O2 = a 3-demethylubiquinol + A + H2O. The protein operates within cofactor biosynthesis; ubiquinone biosynthesis. Catalyzes the hydroxylation of 2-nonaprenyl-3-methyl-6-methoxy-1,4-benzoquinol during ubiquinone biosynthesis. The chain is 3-demethoxyubiquinol 3-hydroxylase from Xanthomonas campestris pv. campestris (strain 8004).